The following is an 80-amino-acid chain: Cell division activator CedA (80 aa).

This sequence belongs to the CedA family.

Activates the cell division inhibited by chromosomal DNA over-replication. This is Cell division activator CedA from Escherichia coli O139:H28 (strain E24377A / ETEC).